Here is a 74-residue protein sequence, read N- to C-terminus: Neuropeptide-like protein 33 (74 aa).

An N-terminal signal peptide occupies residues 1 to 21 (MISTSLLLVVLLFAILAIVDA). At Tyr-72 the chain carries Tyrosine amide.

It belongs to the YARP (YGGW-amide related peptide) family. Expressed in hypoderm.

The protein resides in the secreted. May have antifungic activity against D.coniospora. The protein is Neuropeptide-like protein 33 (nlp-33) of Caenorhabditis elegans.